The primary structure comprises 393 residues: Sugar efflux transporter B (393 aa).

12 helical membrane passes run 13-33 (FDLT…AGAL), 52-72 (MVGF…QFLA), 84-101 (LIVF…LFAW), 105-124 (YFIL…TANP), 152-172 (VSLA…GFSF), 174-194 (VMYL…WFFL), 219-239 (LLLF…IINM), 253-273 (LAGV…LIAG), 283-303 (LLMC…LLAH), 308-328 (LLGL…IGML), 344-364 (LYTN…GIAA), and 366-386 (IWNY…TMFC).

It belongs to the major facilitator superfamily. Set transporter family.

The protein resides in the cell inner membrane. Its function is as follows. Involved in the efflux of sugars. The physiological role may be the detoxification of non-metabolizable sugar analogs. Can transport lactose and glucose. The polypeptide is Sugar efflux transporter B (setB) (Salmonella typhimurium (strain LT2 / SGSC1412 / ATCC 700720)).